Reading from the N-terminus, the 311-residue chain is MRRHLSLVLGSLVIGLALLIAPGASWAYPFWAQQNYDSPREATGKIVCANCHIAKKLTQAEVPQSVLPDSVFTASVKVPYEEGIKEIGADGSEVQLQVGAVVMLPDGFTLAPQDRWTDEIKEETEGVYFTQYSDEQPNILLVGPIPGDQNQEIVFPVLSPDPATDSNIHFGKYQIHVGGNRGRGQVYPTGEKSNNTVFTAPAEGKVASIDAGDNGASVVTIQAADGTSTSETIPVGPQLLVNVGDSVAAGDAITNDPNVGGFGQVDAEIVLQNPVRIYGLLAFFAAVAIAQIMLVLKKRQIEKVQAAEGNF.

The first 27 residues, 1–27, serve as a signal peptide directing secretion; that stretch reads MRRHLSLVLGSLVIGLALLIAPGASWA. The heme site is built by tyrosine 28, cysteine 48, cysteine 51, and histidine 52. The chain crosses the membrane as a helical span at residues 277–297; that stretch reads IYGLLAFFAAVAIAQIMLVLK.

Belongs to the cytochrome f family. In terms of assembly, the 4 large subunits of the cytochrome b6-f complex are cytochrome b6, subunit IV (17 kDa polypeptide, PetD), cytochrome f and the Rieske protein, while the 4 small subunits are PetG, PetL, PetM and PetN. The complex functions as a dimer. Heme serves as cofactor.

The protein resides in the cellular thylakoid membrane. Its function is as follows. Component of the cytochrome b6-f complex, which mediates electron transfer between photosystem II (PSII) and photosystem I (PSI), cyclic electron flow around PSI, and state transitions. The protein is Cytochrome f of Synechococcus sp. (strain CC9902).